The primary structure comprises 416 residues: Phosphoglycerate kinase (416 aa).

Valine 23, aspartate 24, phenylalanine 25, asparagine 26, arginine 39, serine 62, histidine 63, glycine 65, arginine 66, leucine 121, arginine 122, histidine 169, and arginine 170 together coordinate (2R)-3-phosphoglycerate. Position 213 (glycine 213) interacts with ADP. Glycine 213 contributes to the CDP binding site. AMP is bound by residues alanine 214 and lysine 215. An ATP-binding site is contributed by alanine 214. A Mg(2+)-binding site is contributed by alanine 214. Aspartate 218 lines the CDP pocket. Residue aspartate 218 coordinates Mg(2+). Position 219 (lysine 219) interacts with AMP. An ATP-binding site is contributed by lysine 219. ADP is bound at residue glycine 237. Glycine 237 is a binding site for CDP. 2 residues coordinate AMP: glycine 238 and glycine 312. ATP is bound by residues glycine 238 and glycine 312. Residues glycine 337 and phenylalanine 342 each coordinate CDP. Residue phenylalanine 342 participates in ADP binding. Position 343 (glutamate 343) interacts with AMP. Residues glutamate 343, aspartate 374, and threonine 375 each contribute to the ATP site. Position 374 (aspartate 374) interacts with Mg(2+).

Belongs to the phosphoglycerate kinase family. As to quaternary structure, monomer. Mg(2+) serves as cofactor.

Its subcellular location is the cytoplasm. The protein localises to the mitochondrion. The catalysed reaction is (2R)-3-phosphoglycerate + ATP = (2R)-3-phospho-glyceroyl phosphate + ADP. The protein operates within carbohydrate degradation; glycolysis; pyruvate from D-glyceraldehyde 3-phosphate: step 2/5. Its function is as follows. Catalyzes one of the two ATP producing reactions in the glycolytic pathway via the reversible conversion of 1,3-diphosphoglycerate to 3-phosphoglycerate. Both L- and D- forms of purine and pyrimidine nucleotides can be used as substrates, but the activity is much lower on pyrimidines. Negatively regulates the biosynthesis of acetyl-CoA from pyruvate in the mitochondrion. The protein is Phosphoglycerate kinase (pgkA) of Agaricus bisporus (White button mushroom).